The sequence spans 215 residues: 2-phospho-L-lactate guanylyltransferase (215 aa).

The protein belongs to the CofC family. In terms of assembly, homodimer.

It carries out the reaction (2S)-2-phospholactate + GTP + H(+) = (2S)-lactyl-2-diphospho-5'-guanosine + diphosphate. Its pathway is cofactor biosynthesis; coenzyme F420 biosynthesis. Guanylyltransferase that catalyzes the activation of (2S)-2-phospholactate (2-PL) as (2S)-lactyl-2-diphospho-5'-guanosine, via the condensation of 2-PL with GTP. It is involved in the biosynthesis of coenzyme F420, a hydride carrier cofactor. This is 2-phospho-L-lactate guanylyltransferase from Methanococcoides burtonii (strain DSM 6242 / NBRC 107633 / OCM 468 / ACE-M).